Consider the following 294-residue polypeptide: Cytidine deaminase (294 aa).

CMP/dCMP-type deaminase domains are found at residues Asp48–Lys168 and Ala187–Phe294. Residue Asn89 to Glu91 participates in substrate binding. His102 lines the Zn(2+) pocket. Glu104 (proton donor) is an active-site residue. Zn(2+)-binding residues include Cys129 and Cys132.

The protein belongs to the cytidine and deoxycytidylate deaminase family. As to quaternary structure, homodimer. It depends on Zn(2+) as a cofactor.

It carries out the reaction cytidine + H2O + H(+) = uridine + NH4(+). It catalyses the reaction 2'-deoxycytidine + H2O + H(+) = 2'-deoxyuridine + NH4(+). In terms of biological role, this enzyme scavenges exogenous and endogenous cytidine and 2'-deoxycytidine for UMP synthesis. This chain is Cytidine deaminase, found in Serratia proteamaculans (strain 568).